Here is a 256-residue protein sequence, read N- to C-terminus: Ubiquinone/menaquinone biosynthesis C-methyltransferase UbiE (256 aa).

Over residues 1-12 (MNDQRKGDHAEP) the composition is skewed to basic and acidic residues. The tract at residues 1-23 (MNDQRKGDHAEPTTHFGYQDVPE) is disordered. S-adenosyl-L-methionine contacts are provided by residues Thr-79, Asp-100, and 128–129 (DA).

This sequence belongs to the class I-like SAM-binding methyltransferase superfamily. MenG/UbiE family.

It carries out the reaction a 2-demethylmenaquinol + S-adenosyl-L-methionine = a menaquinol + S-adenosyl-L-homocysteine + H(+). It catalyses the reaction a 2-methoxy-6-(all-trans-polyprenyl)benzene-1,4-diol + S-adenosyl-L-methionine = a 5-methoxy-2-methyl-3-(all-trans-polyprenyl)benzene-1,4-diol + S-adenosyl-L-homocysteine + H(+). It participates in quinol/quinone metabolism; menaquinone biosynthesis; menaquinol from 1,4-dihydroxy-2-naphthoate: step 2/2. Its pathway is cofactor biosynthesis; ubiquinone biosynthesis. Its function is as follows. Methyltransferase required for the conversion of demethylmenaquinol (DMKH2) to menaquinol (MKH2) and the conversion of 2-polyprenyl-6-methoxy-1,4-benzoquinol (DDMQH2) to 2-polyprenyl-3-methyl-6-methoxy-1,4-benzoquinol (DMQH2). The chain is Ubiquinone/menaquinone biosynthesis C-methyltransferase UbiE from Pseudomonas putida (strain GB-1).